Here is a 449-residue protein sequence, read N- to C-terminus: Gamma-aminobutyric acid receptor subunit delta (449 aa).

The signal sequence occupies residues 1–24; the sequence is MDVLGWLLLPLLLLCTQPHHGARA. Topologically, residues 25-251 are extracellular; it reads MNDIGDYVGS…QLRRNRGVYI (227 aa). Asparagine 103 and asparagine 106 each carry an N-linked (GlcNAc...) asparagine glycan. A disulfide bridge connects residues cysteine 164 and cysteine 178. Residues 252–271 form a helical membrane-spanning segment; the sequence is IQSYMPSVLLVAMSWVSFWI. Residues 272–275 are Cytoplasmic-facing; sequence SQAA. The helical transmembrane segment at 276 to 298 threads the bilayer; sequence VPARVSLGITTVLTMTTLMVSAR. Residues 299–308 lie on the Extracellular side of the membrane; the sequence is SSLPRASAIK. Residues 309-331 form a helical membrane-spanning segment; the sequence is ALDVYFWICYVFVFAALVEYAFA. Residues 332–423 lie on the Cytoplasmic side of the membrane; that stretch reads HFNADYRKKR…SRLKPIDADT (92 aa). Residue serine 390 is modified to Phosphoserine. Residues 424-446 form a helical membrane-spanning segment; that stretch reads IDIYARAVFPAAFAAVNIIYWAA. At 447-449 the chain is on the extracellular side; sequence YTM.

This sequence belongs to the ligand-gated ion channel (TC 1.A.9) family. Gamma-aminobutyric acid receptor (TC 1.A.9.5) subfamily. GABRD sub-subfamily. In terms of assembly, heteropentamer, formed by a combination of alpha (GABRA1-6), beta (GABRB1-3), gamma (GABRG1-3), delta (GABRD), epsilon (GABRE), rho (GABRR1-3), pi (GABRP) and theta (GABRQ) chains, each subunit exhibiting distinct physiological and pharmacological properties.

The protein localises to the cell membrane. It catalyses the reaction chloride(in) = chloride(out). In terms of biological role, delta subunit of the heteropentameric ligand-gated chloride channel gated by gamma-aminobutyric acid (GABA), a major inhibitory neurotransmitter in the brain. GABA-gated chloride channels, also named GABA(A) receptors (GABAAR), consist of five subunits arranged around a central pore and contain GABA active binding site(s) located at the alpha and beta subunit interface(s). When activated by GABA, GABAARs selectively allow the flow of chloride anions across the cell membrane down their electrochemical gradient. GABAARs containing delta/GABRD subunits are predominantly expressed and located in extrasynaptic or perisynaptic positions on hippocampus and cerebellar granule cells, and contribute to the tonic GABAergic inhibition. GABAAR containing alpha-4-beta-3-delta subunits can simultaneously bind GABA and histamine where histamine binds at the interface of two neighboring beta subunits, which may be involved in the regulation of sleep and wakefulness. The sequence is that of Gamma-aminobutyric acid receptor subunit delta from Mus musculus (Mouse).